The chain runs to 65 residues: Conotoxin Am6.4 (65 aa).

A disordered region spans residues 1–33 (STGKRNAGKLTVTDDVEADRDTDPDDKDPSVHN). Positions 1-36 (STGKRNAGKLTVTDDVEADRDTDPDDKDPSVHNSWR) are excised as a propeptide. Acidic residues predominate over residues 14–26 (DDVEADRDTDPDD). 3 disulfides stabilise this stretch: Cys-40-Cys-50, Cys-45-Cys-59, and Cys-49-Cys-64.

Post-translationally, is not hydroxylated. As to expression, expressed by the venom duct.

It localises to the secreted. Its function is as follows. Probable toxin that inhibits ion channels. The chain is Conotoxin Am6.4 from Conus amadis (Amadis cone).